Reading from the N-terminus, the 130-residue chain is Cytochrome c-type biogenesis protein CcmE (130 aa).

Residues 1-7 (MKKKHKR) lie on the Cytoplasmic side of the membrane. A helical; Signal-anchor for type II membrane protein transmembrane segment spans residues 8-28 (LLITSGIFCFLSCAVFFILTT). The Extracellular portion of the chain corresponds to 29–130 (LKENISFFYT…DENYMPKVLK (102 aa)). 2 residues coordinate heme: His120 and Tyr124.

Belongs to the CcmE/CycJ family.

It localises to the cell membrane. Its function is as follows. Heme chaperone required for the biogenesis of c-type cytochromes. Transiently binds heme delivered by CcmC and transfers the heme to apo-cytochromes in a process facilitated by CcmF and CcmH. This chain is Cytochrome c-type biogenesis protein CcmE, found in Wolbachia pipientis wMel.